Here is a 460-residue protein sequence, read N- to C-terminus: Elongation factor 1-alpha (460 aa).

The residue at position 2 (G2) is a N,N,N-trimethylglycine. K3 carries the N6,N6-dimethyllysine; alternate modification. K3 is subject to N6-methyllysine; alternate. The tr-type G domain maps to 6-241 (KTHINVVVIG…DSIEPPKRPT (236 aa)). Residues 15-22 (GHVDSGKS) are G1. 15-22 (GHVDSGKS) provides a ligand contact to GTP. K31 carries the post-translational modification N6-methyllysine. Residues 71 to 75 (GITID) are G2. K80 is modified (N6,N6,N6-trimethyllysine). Residues 92–95 (DAPG) are G3. GTP contacts are provided by residues 92–96 (DAPGH) and 154–157 (NKMD). Positions 154 to 157 (NKMD) are G4. A G5 region spans residues 193-195 (SGF). K317 carries the N6,N6-dimethyllysine; alternate modification. The residue at position 317 (K317) is an N6-methyllysine; alternate. K391 carries the post-translational modification N6-methyllysine.

This sequence belongs to the TRAFAC class translation factor GTPase superfamily. Classic translation factor GTPase family. EF-Tu/EF-1A subfamily.

It localises to the cytoplasm. Functionally, this protein promotes the GTP-dependent binding of aminoacyl-tRNA to the A-site of ribosomes during protein biosynthesis. The sequence is that of Elongation factor 1-alpha (TEF) from Podospora anserina (Pleurage anserina).